Reading from the N-terminus, the 376-residue chain is Thymidine kinase (376 aa).

Residues 1–38 (MASYPCHQHASAFDQAARSRGHNNRRTALRPRRQQKAT) form a disordered region. Residues 19 to 35 (SRGHNNRRTALRPRRQQ) are compositionally biased toward basic residues. 56–63 (GPHGMGKT) provides a ligand contact to ATP. The Proton acceptor role is filled by E83. Positions 101 and 125 each coordinate substrate. ATP is bound at residue R216. R222 serves as a coordination point for substrate.

Belongs to the herpesviridae thymidine kinase family. As to quaternary structure, homodimer.

It catalyses the reaction thymidine + ATP = dTMP + ADP + H(+). Its function is as follows. Catalyzes the transfer of the gamma-phospho group of ATP to thymidine to generate dTMP in the salvage pathway of pyrimidine synthesis. The dTMP serves as a substrate for DNA polymerase during viral DNA replication. Allows the virus to be reactivated and to grow in non-proliferative cells lacking a high concentration of phosphorylated nucleic acid precursors. This is Thymidine kinase from Homo sapiens (Human).